The primary structure comprises 901 residues: Probable inorganic carbon transporter subunit DabA (901 aa).

Zn(2+)-binding residues include Cys-424, Asp-426, His-606, and Cys-621.

This sequence belongs to the inorganic carbon transporter (TC 9.A.2) DabA family. In terms of assembly, forms a complex with DabB. Requires Zn(2+) as cofactor.

The protein resides in the cell membrane. Functionally, part of an energy-coupled inorganic carbon pump. This is Probable inorganic carbon transporter subunit DabA from Staphylococcus aureus (strain NCTC 8325 / PS 47).